The chain runs to 468 residues: bZIP transcription factor 14 (468 aa).

2 disordered regions span residues 55–149 (SRRK…EGRA) and 234–272 (SPQS…LGKD). Composition is skewed to low complexity over residues 64–82 (SFVS…SSGS) and 95–106 (VTAASTESVSSS). Positions 112 to 128 (KKADTDDRVQRSRERNR) are enriched in basic and acidic residues. Residues 117 to 165 (DDRVQRSRERNRIHARKTRQRKKEQMQSLEGRATDLKHEQIRLKQIINE) form the bZIP 1 domain. Residues 119-139 (RVQRSRERNRIHARKTRQRKK) form a basic motif 1 region. The span at 129 to 138 (IHARKTRQRK) shows a compositional bias: basic residues. The segment at 145 to 159 (LEGRATDLKHEQIRL) is leucine-zipper 1. Positions 247 to 256 (ASTSDVSGDE) are enriched in polar residues. Residues 279–333 (EELDQIRRERNRMHAKRTRDRKRIFTEEMAEMCRILEEENHLLRVHLGGLDSDFK) enclose the bZIP 2 domain. The interval 285–312 (RRERNRMHAKRTRDRKRIFTEEMAEMCR) is basic motif 2. The interval 313 to 320 (ILEEENHL) is leucine-zipper 2. The interval 400-468 (ERQQREAERK…TTSLAAPVGW (69 aa)) is disordered. Basic and acidic residues predominate over residues 401 to 410 (RQQREAERKV). Residues 417 to 426 (SAASDTSTSD) show a composition bias toward low complexity.

It belongs to the bZIP family.

Its subcellular location is the nucleus. Functionally, transcriptional activator which binds to the C-box-like motif 5'-TGACGT-3' and A-box-like motif 5'-GTACGTA-3' of target promoters to positively regulate the expression of genes involved in the tricarboxylic acid (TCA) cycle in response to nitrogen starvation. May also regulate the TCA cycle during day-to-night transitions. In Phaeodactylum tricornutum (strain CCAP 1055/1), this protein is bZIP transcription factor 14.